A 266-amino-acid chain; its full sequence is Glucosamine-6-phosphate deaminase (266 aa).

D72 acts as the Proton acceptor; for enolization step in catalysis. The For ring-opening step role is filled by D141. The active-site Proton acceptor; for ring-opening step is the H143. E148 (for ring-opening step) is an active-site residue.

This sequence belongs to the glucosamine/galactosamine-6-phosphate isomerase family. NagB subfamily. In terms of assembly, homohexamer.

It carries out the reaction alpha-D-glucosamine 6-phosphate + H2O = beta-D-fructose 6-phosphate + NH4(+). It participates in amino-sugar metabolism; N-acetylneuraminate degradation; D-fructose 6-phosphate from N-acetylneuraminate: step 5/5. Its activity is regulated as follows. Allosterically activated by N-acetylglucosamine 6-phosphate (GlcNAc6P). In terms of biological role, catalyzes the reversible isomerization-deamination of glucosamine 6-phosphate (GlcN6P) to form fructose 6-phosphate (Fru6P) and ammonium ion. This Enterobacter sp. (strain 638) protein is Glucosamine-6-phosphate deaminase.